A 765-amino-acid polypeptide reads, in one-letter code: Dipeptidyl peptidase 4 (765 aa).

At 1–6 the chain is on the cytoplasmic side; the sequence is MKTPWK. Residues 7 to 29 traverse the membrane as a helical; Signal-anchor for type II membrane protein segment; it reads VLLGLLGLAALITIITVPVVLLN. Residues 30 to 765 lie on the Extracellular side of the membrane; sequence KGNDAAADSR…HFIKQCFSLP (736 aa). N-linked (GlcNAc...) asparagine glycans are attached at residues Asn84, Asn91, Asn149, Asn178, Asn228, Asn280, Asn320, Asn330, and Asn331. 3 disulfide bridges follow: Cys384/Cys393, Cys443/Cys446, and Cys453/Cys471. N-linked (GlcNAc...) asparagine glycosylation is present at Asn519. The active-site Charge relay system is Ser629. A disulfide bridge links Cys648 with Cys761. Asn684 carries N-linked (GlcNAc...) asparagine glycosylation. Residues Asp707 and His739 each act as charge relay system in the active site.

This sequence belongs to the peptidase S9B family. DPPIV subfamily. As to quaternary structure, monomer. Homodimer. Heterodimer with Seprase (FAP). Requires homodimerization for optimal dipeptidyl peptidase activity and T-cell costimulation. Found in a membrane raft complex, at least composed of BCL10, CARD11, DPP4 and IKBKB. Associates with collagen. Interacts with PTPRC; the interaction is enhanced in an interleukin-12-dependent manner in activated lymphocytes. Interacts (extracellular domain) with ADA; does not inhibit its dipeptidyl peptidase activity. Interacts with CAV1 (via the N-terminus); the interaction is direct. Interacts (via cytoplasmic tail) with CARD11 (via PDZ domain); its homodimerization is necessary for interaction with CARD11. Interacts with IGF2R; the interaction is direct. Interacts with GPC3. Post-translationally, the soluble form (Dipeptidyl peptidase 4 soluble form also named SDPP) derives from the membrane form (Dipeptidyl peptidase 4 membrane form also named MDPP) by proteolytic processing. N- and O-Glycosylated. In terms of processing, phosphorylated. Mannose 6-phosphate residues in the carbohydrate moiety are necessary for interaction with IGF2R in activated T-cells. Mannose 6-phosphorylation is induced during T-cell activation.

It localises to the secreted. The protein resides in the cell membrane. Its subcellular location is the apical cell membrane. It is found in the cell projection. The protein localises to the invadopodium membrane. It localises to the lamellipodium membrane. The protein resides in the cell junction. Its subcellular location is the membrane raft. The catalysed reaction is Release of an N-terminal dipeptide, Xaa-Yaa-|-Zaa-, from a polypeptide, preferentially when Yaa is Pro, provided Zaa is neither Pro nor hydroxyproline.. Inhibited by GPC3 and diprotin A. Its function is as follows. Cell surface glycoprotein receptor involved in the costimulatory signal essential for T-cell receptor (TCR)-mediated T-cell activation. Acts as a positive regulator of T-cell coactivation, by binding at least ADA, CAV1, IGF2R, and PTPRC. Its binding to CAV1 and CARD11 induces T-cell proliferation and NF-kappa-B activation in a T-cell receptor/CD3-dependent manner. Its interaction with ADA also regulates lymphocyte-epithelial cell adhesion. In association with FAP is involved in the pericellular proteolysis of the extracellular matrix (ECM), the migration and invasion of endothelial cells into the ECM. May be involved in the promotion of lymphatic endothelial cells adhesion, migration and tube formation. When overexpressed, enhanced cell proliferation, a process inhibited by GPC3. Also acts as a serine exopeptidase with a dipeptidyl peptidase activity that regulates various physiological processes by cleaving peptides in the circulation, including many chemokines, mitogenic growth factors, neuropeptides and peptide hormones. Removes N-terminal dipeptides sequentially from polypeptides having unsubstituted N-termini provided that the penultimate residue is proline. This is Dipeptidyl peptidase 4 (DPP4) from Felis catus (Cat).